Consider the following 600-residue polypeptide: Long-chain-fatty-acid--CoA ligase FadD15 (600 aa).

This sequence belongs to the ATP-dependent AMP-binding enzyme family.

It carries out the reaction a long-chain fatty acid + ATP + CoA = a long-chain fatty acyl-CoA + AMP + diphosphate. The protein operates within lipid metabolism; fatty acid biosynthesis. Functionally, catalyzes the activation of long-chain fatty acids as acyl-coenzyme A (acyl-CoA), which are then transferred to the multifunctional polyketide synthase (PKS) type III for further chain extension. This Mycobacterium bovis (strain ATCC BAA-935 / AF2122/97) protein is Long-chain-fatty-acid--CoA ligase FadD15 (fadD15).